The primary structure comprises 852 residues: Probable nitrite reductase-hydroxylamine oxidoreductase fusion protein (852 aa).

The signal sequence occupies residues 1 to 27; the sequence is MLNKSAALVPVVLAFLFLFLCFQCLYA. The tract at residues 28 to 327 is nitrite reductase domain; that stretch reads DIRCLTGKDG…DEGRKTLSAP (300 aa). 2 consecutive Plastocyanin-like domains span residues 72-169 and 217-307; these read VPGP…IVEP and GETW…VEEG. H102 and H145 together coordinate Cu cation. The tract at residues 328–827 is hydroxylamine oxidoreductase domain; that stretch reads GQDRQPPTLE…ISWWWGTAQG (500 aa). Residues C406, C409, H410, H426, C463, C466, H467, H471, C483, C486, H487, H505, H537, C543, C546, H547, H550, C563, C566, H567, C614, C617, H618, C686, C689, H690, and H813 each contribute to the heme site.

It in the N-terminal section; belongs to the multicopper oxidase family. Cu cation serves as cofactor. Heme is required as a cofactor.

The protein localises to the encapsulin nanocompartment. The enzyme catalyses hydroxylamine + 4 Fe(III)-[cytochrome c] + H2O = 4 Fe(II)-[cytochrome c] + nitrite + 5 H(+). It carries out the reaction nitric oxide + Fe(III)-[cytochrome c] + H2O = Fe(II)-[cytochrome c] + nitrite + 2 H(+). A nitrite reductase-hydroxylamine oxidoreductase protein that probably functions in the type 1 encapsulin nanocompartment. Probably involved in reductive catalysis. Targeted to the encapsulin nanocompartment by association with the diheme domain of the encapsulin shell protein (AC Q1Q6L7). Catalyzes the reduction of nitrite to nitric oxide (NO). Catalyzes the oxidation of hydroxylamine to nitrite. In Kuenenia stuttgartiensis, this protein is Probable nitrite reductase-hydroxylamine oxidoreductase fusion protein.